The sequence spans 283 residues: Pantothenate synthetase (283 aa).

30-37 (MGNLHDGH) contacts ATP. The active-site Proton donor is His-37. Gln-61 is a binding site for (R)-pantoate. Gln-61 provides a ligand contact to beta-alanine. ATP is bound at residue 149-152 (GEKD). (R)-pantoate is bound at residue Gln-155. ATP is bound at residue 186 to 189 (LSSR).

This sequence belongs to the pantothenate synthetase family. As to quaternary structure, homodimer.

Its subcellular location is the cytoplasm. The enzyme catalyses (R)-pantoate + beta-alanine + ATP = (R)-pantothenate + AMP + diphosphate + H(+). The protein operates within cofactor biosynthesis; (R)-pantothenate biosynthesis; (R)-pantothenate from (R)-pantoate and beta-alanine: step 1/1. Its function is as follows. Catalyzes the condensation of pantoate with beta-alanine in an ATP-dependent reaction via a pantoyl-adenylate intermediate. This is Pantothenate synthetase from Escherichia coli O127:H6 (strain E2348/69 / EPEC).